Consider the following 189-residue polypeptide: Parkinson disease protein 7 homolog (189 aa).

Ala2 bears the N-acetylalanine mark. Residues Cys46 and Cys53 are each lipidated (S-palmitoyl cysteine). The residue at position 67 (Tyr67) is a Phosphotyrosine. Residue Cys106 is the Nucleophile of the active site. Cys106 carries the post-translational modification Cysteine sulfinic acid (-SO2H); alternate. The S-palmitoyl cysteine; alternate moiety is linked to residue Cys106. The active site involves His126. Lys130 participates in a covalent cross-link: Glycyl lysine isopeptide (Lys-Gly) (interchain with G-Cter in SUMO). N6-acetyllysine is present on Lys148. Lys182 bears the N6-succinyllysine mark.

This sequence belongs to the peptidase C56 family. As to quaternary structure, homodimer. Binds EFCAB6/DJBP and PIAS2. Part of a ternary complex containing PARK7, EFCAB6/DJBP and AR. Binds to HIPK1. Interacts (via N-terminus) with OTUD7B. Interacts with BBS1, CLCF1 and MTERF. Interacts (via C-terminus) with NCF1; the interaction is enhanced by LPS and modulates NCF1 phosphorylation and membrane translocation. Interacts with NENF. It depends on Deglycase activity does not require glutathione as a cofactor, however, glycated glutathione constitutes a PARK7 substrate. as a cofactor. In terms of processing, sumoylated on Lys-130 by PIAS2 or PIAS4; which is essential for cell-growth promoting activity and transforming activity. Undergoes cleavage of a C-terminal peptide and subsequent activation of protease activity in response to oxidative stress. As to expression, expressed in erythroblasts and in mature red blood cells from peripheral blood (at protein level). In pancreas, expression is higher in islets than surrounding exocrine tissues.

It is found in the cell membrane. Its subcellular location is the cytoplasm. The protein resides in the membrane raft. It localises to the nucleus. The protein localises to the mitochondrion. It is found in the endoplasmic reticulum. It catalyses the reaction N(omega)-(1-hydroxy-2-oxopropyl)-L-arginyl-[protein] + H2O = lactate + L-arginyl-[protein] + H(+). It carries out the reaction N(6)-(1-hydroxy-2-oxopropyl)-L-lysyl-[protein] + H2O = lactate + L-lysyl-[protein] + H(+). The catalysed reaction is S-(1-hydroxy-2-oxopropyl)-L-cysteinyl-[protein] + H2O = lactate + L-cysteinyl-[protein] + H(+). The enzyme catalyses N(omega)-(1-hydroxy-2-oxoethyl)-L-arginyl-[protein] + H2O = L-arginyl-[protein] + glycolate + H(+). It catalyses the reaction N(6)-(1-hydroxy-2-oxoethyl)-L-lysyl-[protein] + H2O = glycolate + L-lysyl-[protein] + H(+). It carries out the reaction S-(1-hydroxy-2-oxoethyl)-L-cysteinyl-[protein] + H2O = glycolate + L-cysteinyl-[protein] + H(+). The catalysed reaction is N(2)-(1-hydroxy-2-oxopropyl)-dGTP + H2O = lactate + dGTP + H(+). The enzyme catalyses N(2)-(1-hydroxy-2-oxopropyl)-GTP + H2O = lactate + GTP + H(+). It catalyses the reaction N(2)-(1-hydroxy-2-oxopropyl)-GDP + H2O = lactate + GDP + H(+). It carries out the reaction N(2)-(1-hydroxy-2-oxopropyl)-GMP + H2O = lactate + GMP + H(+). The catalysed reaction is N(2)-(1-hydroxy-2-oxoethyl)-dGTP + H2O = dGTP + glycolate + H(+). The enzyme catalyses N(2)-(1-hydroxy-2-oxoethyl)-GTP + H2O = glycolate + GTP + H(+). It catalyses the reaction N(2)-(1-hydroxy-2-oxoethyl)-GDP + H2O = glycolate + GDP + H(+). It carries out the reaction N(2)-(1-hydroxy-2-oxoethyl)-GMP + H2O = glycolate + GMP + H(+). The catalysed reaction is an N(2)-(1-hydroxy-2-oxopropyl)-guanosine in RNA + H2O = a guanosine in RNA + lactate + H(+). The enzyme catalyses an N(2)-(1-hydroxy-2-oxopropyl)-2'-deoxyguanosine in DNA + H2O = a 2'-deoxyguanosine in DNA + lactate + H(+). It catalyses the reaction an N(2)-(1-hydroxy-2-oxoethyl)-guanosine in RNA + H2O = a guanosine in RNA + glycolate + H(+). It carries out the reaction an N(2)-(1-hydroxy-2-oxoethyl)-2'-deoxyguanosine in DNA + H2O = a 2'-deoxyguanosine in DNA + glycolate + H(+). In terms of biological role, multifunctional protein with controversial molecular function which plays an important role in cell protection against oxidative stress and cell death acting as oxidative stress sensor and redox-sensitive chaperone and protease. It is involved in neuroprotective mechanisms like the stabilization of NFE2L2 and PINK1 proteins, male fertility as a positive regulator of androgen signaling pathway as well as cell growth and transformation through, for instance, the modulation of NF-kappa-B signaling pathway. Has been described as a protein and nucleotide deglycase that catalyzes the deglycation of the Maillard adducts formed between amino groups of proteins or nucleotides and reactive carbonyl groups of glyoxals. But this function is rebuted by other works. As a protein deglycase, repairs methylglyoxal- and glyoxal-glycated proteins, and releases repaired proteins and lactate or glycolate, respectively. Deglycates cysteine, arginine and lysine residues in proteins, and thus reactivates these proteins by reversing glycation by glyoxals. Acts on early glycation intermediates (hemithioacetals and aminocarbinols), preventing the formation of advanced glycation endproducts (AGE) that cause irreversible damage. Also functions as a nucleotide deglycase able to repair glycated guanine in the free nucleotide pool (GTP, GDP, GMP, dGTP) and in DNA and RNA. Is thus involved in a major nucleotide repair system named guanine glycation repair (GG repair), dedicated to reversing methylglyoxal and glyoxal damage via nucleotide sanitization and direct nucleic acid repair. Protects histones from adduction by methylglyoxal, controls the levels of methylglyoxal-derived argininine modifications on chromatin. Able to remove the glycations and restore histone 3, histone glycation disrupts both local and global chromatin architecture by altering histone-DNA interactions as well as histone acetylation and ubiquitination levels. Displays a very low glyoxalase activity that may reflect its deglycase activity. Eliminates hydrogen peroxide and protects cells against hydrogen peroxide-induced cell death. Required for correct mitochondrial morphology and function as well as for autophagy of dysfunctional mitochondria. Plays a role in regulating expression or stability of the mitochondrial uncoupling proteins SLC25A14 and SLC25A27 in dopaminergic neurons of the substantia nigra pars compacta and attenuates the oxidative stress induced by calcium entry into the neurons via L-type channels during pacemaking. Regulates astrocyte inflammatory responses, may modulate lipid rafts-dependent endocytosis in astrocytes and neuronal cells. In pancreatic islets, involved in the maintenance of mitochondrial reactive oxygen species (ROS) levels and glucose homeostasis in an age- and diet dependent manner. Protects pancreatic beta cells from cell death induced by inflammatory and cytotoxic setting. Binds to a number of mRNAs containing multiple copies of GG or CC motifs and partially inhibits their translation but dissociates following oxidative stress. Metal-binding protein able to bind copper as well as toxic mercury ions, enhances the cell protection mechanism against induced metal toxicity. In macrophages, interacts with the NADPH oxidase subunit NCF1 to direct NADPH oxidase-dependent ROS production, and protects against sepsis. The protein is Parkinson disease protein 7 homolog of Mus musculus (Mouse).